The primary structure comprises 492 residues: Trk system potassium uptake protein TrkI (492 aa).

The next 10 membrane-spanning stretches (helical) occupy residues 20–40, 47–67, 81–101, 143–163, 196–216, 246–266, 282–302, 334–354, 403–423, and 465–485; these read VLAV…LVLI, ALAF…SWIV, FVLT…PLVL, IMQW…LPFL, IYCG…MSPL, QLLW…VLYI, VQGL…WRVS, AWGA…GCSG, VVAF…GLSL, and WLLC…LVLL.

The protein belongs to the TrkH potassium transport family.

It is found in the cell inner membrane. Medium-affinity potassium transport system. Probably interacts with Trk system potassium uptake protein TrkA. Main K(+) transporter in osmotically adapted cells. This chain is Trk system potassium uptake protein TrkI (trkI), found in Halomonas elongata (strain ATCC 33173 / DSM 2581 / NBRC 15536 / NCIMB 2198 / 1H9).